We begin with the raw amino-acid sequence, 93 residues long: uncharacterized protein (93 aa).

It localises to the plastid. The protein resides in the chloroplast. This is an uncharacterized protein from Diacronema lutheri (Unicellular marine alga).